The primary structure comprises 226 residues: V-type proton ATPase subunit E 2 (226 aa).

This sequence belongs to the V-ATPase E subunit family. As to quaternary structure, V-ATPase is a heteromultimeric enzyme made up of two complexes: the ATP-hydrolytic V1 complex and the proton translocation V0 complex. The V1 complex consists of three catalytic AB heterodimers that form a heterohexamer, three peripheral stalks each consisting of EG heterodimers, one central rotor including subunits D and F, and the regulatory subunits C and H. The proton translocation complex V0 consists of the proton transport subunit a, a ring of proteolipid subunits c9c'', rotary subunit d, subunits e and f, and the accessory subunits ATP6AP1/Ac45 and ATP6AP2/PRR. In terms of tissue distribution, testis specific.

In terms of biological role, subunit of the V1 complex of vacuolar(H+)-ATPase (V-ATPase), a multisubunit enzyme composed of a peripheral complex (V1) that hydrolyzes ATP and a membrane integral complex (V0) that translocates protons. V-ATPase is responsible for acidifying and maintaining the pH of intracellular compartments and in some cell types, is targeted to the plasma membrane, where it is responsible for acidifying the extracellular environment. This is V-type proton ATPase subunit E 2 (Atp6v1e2) from Mus musculus (Mouse).